Here is an 831-residue protein sequence, read N- to C-terminus: Translation initiation factor IF-2 (831 aa).

The region spanning 329–499 (TRAPVVTVMG…LLIAEMQDLK (171 aa)) is the tr-type G domain. Residues 338–345 (GHVDHGKT) form a G1 region. GTP is bound at residue 338-345 (GHVDHGKT). Residues 363-367 (GITQH) are G2. Residues 385-388 (DTPG) form a G3 region. Residues 385–389 (DTPGH) and 439–442 (NKID) contribute to the GTP site. The interval 439 to 442 (NKID) is G4. Positions 475 to 477 (SAL) are G5.

This sequence belongs to the TRAFAC class translation factor GTPase superfamily. Classic translation factor GTPase family. IF-2 subfamily.

Its subcellular location is the cytoplasm. In terms of biological role, one of the essential components for the initiation of protein synthesis. Protects formylmethionyl-tRNA from spontaneous hydrolysis and promotes its binding to the 30S ribosomal subunits. Also involved in the hydrolysis of GTP during the formation of the 70S ribosomal complex. The polypeptide is Translation initiation factor IF-2 (Rickettsia rickettsii (strain Iowa)).